Consider the following 321-residue polypeptide: Hydropyrene synthase (321 aa).

Mg(2+) is bound by residues aspartate 82, asparagine 225, serine 229, and glutamate 233. Residues 82 to 87 carry the DDxx(x)D/E motif motif; that stretch reads DDRAID. Residues 225–233 carry the NDxxSxxxD/E motif motif; that stretch reads NDLHSFARE.

Belongs to the terpene synthase family. Mg(2+) is required as a cofactor.

It catalyses the reaction (2E,6E,10E)-geranylgeranyl diphosphate = hydropyrene + diphosphate. The catalysed reaction is (2E,6E,10E)-geranylgeranyl diphosphate + H2O = hydropyrenol + diphosphate. It carries out the reaction (2E,6E,10E)-geranylgeranyl diphosphate = isoelisabethatriene + diphosphate. It participates in secondary metabolite biosynthesis; terpenoid biosynthesis. Terpene synthase that catalyzes the conversion of geranylgeranyl diphosphate (GGPP) into a mixture of diterpenes, including hydropyrene (HP), hydropyrenol (HPol), isoelisabethatriene and traces of isoelisabethatriene B. Hydropyrene is the main product. Some other diterpenoids are also produced in very low quantities. The polypeptide is Hydropyrene synthase (Streptomyces clavuligerus).